The chain runs to 214 residues: Probable nicotinate-nucleotide adenylyltransferase (214 aa).

The protein belongs to the NadD family.

It carries out the reaction nicotinate beta-D-ribonucleotide + ATP + H(+) = deamido-NAD(+) + diphosphate. The protein operates within cofactor biosynthesis; NAD(+) biosynthesis; deamido-NAD(+) from nicotinate D-ribonucleotide: step 1/1. Its function is as follows. Catalyzes the reversible adenylation of nicotinate mononucleotide (NaMN) to nicotinic acid adenine dinucleotide (NaAD). This is Probable nicotinate-nucleotide adenylyltransferase from Pseudomonas aeruginosa (strain UCBPP-PA14).